Reading from the N-terminus, the 441-residue chain is Methylenetetrahydrofolate--tRNA-(uracil-5-)-methyltransferase TrmFO (441 aa).

Residue 11 to 16 (GGGLAG) participates in FAD binding.

The protein belongs to the MnmG family. TrmFO subfamily. It depends on FAD as a cofactor.

The protein resides in the cytoplasm. It catalyses the reaction uridine(54) in tRNA + (6R)-5,10-methylene-5,6,7,8-tetrahydrofolate + NADH + H(+) = 5-methyluridine(54) in tRNA + (6S)-5,6,7,8-tetrahydrofolate + NAD(+). It carries out the reaction uridine(54) in tRNA + (6R)-5,10-methylene-5,6,7,8-tetrahydrofolate + NADPH + H(+) = 5-methyluridine(54) in tRNA + (6S)-5,6,7,8-tetrahydrofolate + NADP(+). In terms of biological role, catalyzes the folate-dependent formation of 5-methyl-uridine at position 54 (M-5-U54) in all tRNAs. The chain is Methylenetetrahydrofolate--tRNA-(uracil-5-)-methyltransferase TrmFO from Syntrophus aciditrophicus (strain SB).